The chain runs to 312 residues: Tetraacyldisaccharide 4'-kinase (312 aa).

Residue 60-67 participates in ATP binding; the sequence is IAGGSGKT.

This sequence belongs to the LpxK family.

The enzyme catalyses a lipid A disaccharide + ATP = a lipid IVA + ADP + H(+). It participates in glycolipid biosynthesis; lipid IV(A) biosynthesis; lipid IV(A) from (3R)-3-hydroxytetradecanoyl-[acyl-carrier-protein] and UDP-N-acetyl-alpha-D-glucosamine: step 6/6. Its function is as follows. Transfers the gamma-phosphate of ATP to the 4'-position of a tetraacyldisaccharide 1-phosphate intermediate (termed DS-1-P) to form tetraacyldisaccharide 1,4'-bis-phosphate (lipid IVA). This chain is Tetraacyldisaccharide 4'-kinase, found in Helicobacter acinonychis (strain Sheeba).